A 519-amino-acid chain; its full sequence is Voltage-gated potassium channel regulatory subunit KCNG4 (519 aa).

The disordered stretch occupies residues 1–25 (MPMPSRDGGLHPRHHHYGSHSPWSQ). Residues 1 to 218 (MPMPSRDGGL…EMVENPQSGL (218 aa)) lie on the Cytoplasmic side of the membrane. Residues 219–240 (PGKVFACLSILFVATTAVSLCV) traverse the membrane as a helical segment. Topologically, residues 241–261 (STMPDLRAEEDQGECSRKCYY) are extracellular. Residues 262-283 (IFIVETICVAWFSLEFCLRFVQ) form a helical membrane-spanning segment. Residues 284 to 294 (AQDKCQFFQGP) lie on the Cytoplasmic side of the membrane. Residues 295 to 314 (LNIIDILAISPYYVSLAVSE) traverse the membrane as a helical segment. The Extracellular segment spans residues 315–328 (EPPEDGERPSGSSY). A helical; Voltage-sensor membrane pass occupies residues 329–353 (LEKVGLVLRVLRALRILYVMRLARH). The Cytoplasmic portion of the chain corresponds to 354–368 (SLGLQTLGLTVRRCT). The helical transmembrane segment at 369-390 (REFGLLLLFLAVAITLFSPLVY) threads the bilayer. Residues 391–405 (VAEKESGRVLEFTSI) are Extracellular-facing. Residues 406-417 (PASYWWAIISMT) constitute an intramembrane region (helical). The Selectivity filter motif lies at 418–423 (TVGYGD). The stretch at 418 to 425 (TVGYGDMV) is an intramembrane region. Residues 426–432 (PRSVPGQ) are Extracellular-facing. A helical transmembrane segment spans residues 433–461 (MVALSSILSGILIMAFPATSIFHTFSHSY). The Cytoplasmic portion of the chain corresponds to 462 to 519 (LELKKEQEQLQARLRHLQNTGPASECELLDPHVASEHELMNDVNDLILEGPALPIMHM).

It belongs to the potassium channel family. G (TC 1.A.1.2) subfamily. Kv6.4/KCNG4 sub-subfamily. Heterotetramer with KCNB1. Does not form homomultimer. In terms of tissue distribution, highly expressed in brain, and at lower levels in liver, small intestine and colon.

Its subcellular location is the cell membrane. Functionally, regulatory subunit of the voltage-gated potassium (Kv) channel which, when coassembled with KCNB1, modulates the kinetics parameters of the heterotetrameric channel namely the time course of activation, deactivation and inactivation and on the voltage-dependence of activation. Potassium channel subunit that does not form functional channels by itself. Reduces the deactivation rate. Modulates the threshold for activation by shifting by approximately 20 mV in hyperpolarizing direction. Markedly changes the inactivation by shifting the voltage dependence of inactivation by approximately 40 mV in hyperpolarizing direction. Acceleratee activation and enhances the time course of activation. The chain is Voltage-gated potassium channel regulatory subunit KCNG4 from Homo sapiens (Human).